A 216-amino-acid polypeptide reads, in one-letter code: Regulator of G-protein signaling 19 (216 aa).

Residues Met1 to Arg19 are compositionally biased toward basic and acidic residues. A disordered region spans residues Met1–Pro30. Phosphoserine occurs at positions 24 and 97. Residues Ser90–Leu206 enclose the RGS domain. Phosphoserine; by MAPK1 and MAPK3 is present on Ser151. An interaction with GIPC region spans residues Leu207–Ala216.

As to quaternary structure, interacts with GIPC PDZ domain. Interacts with GNAO1. Fatty acylated. Heavily palmitoylated in the cysteine string motif. In terms of processing, phosphorylated, mainly on serine residues.

It localises to the membrane. Inhibits signal transduction by increasing the GTPase activity of G protein alpha subunits thereby driving them into their inactive GDP-bound form. Binds to G-alpha subfamily 1 members, with the order G(i)a3 &gt; G(i)a1 &gt; G(o)a &gt;&gt; G(z)a/G(i)a2. Activity on G(z)-alpha is inhibited by phosphorylation and palmitoylation of the G-protein. The polypeptide is Regulator of G-protein signaling 19 (Rgs19) (Mus musculus (Mouse)).